The chain runs to 285 residues: Bifunctional protein FolD (285 aa).

NADP(+) is bound by residues 165-167, T192, and V233; that span reads GRG.

This sequence belongs to the tetrahydrofolate dehydrogenase/cyclohydrolase family. In terms of assembly, homodimer.

The catalysed reaction is (6R)-5,10-methylene-5,6,7,8-tetrahydrofolate + NADP(+) = (6R)-5,10-methenyltetrahydrofolate + NADPH. The enzyme catalyses (6R)-5,10-methenyltetrahydrofolate + H2O = (6R)-10-formyltetrahydrofolate + H(+). It functions in the pathway one-carbon metabolism; tetrahydrofolate interconversion. Catalyzes the oxidation of 5,10-methylenetetrahydrofolate to 5,10-methenyltetrahydrofolate and then the hydrolysis of 5,10-methenyltetrahydrofolate to 10-formyltetrahydrofolate. The protein is Bifunctional protein FolD of Corynebacterium jeikeium (strain K411).